Reading from the N-terminus, the 236-residue chain is Phosphoribosylaminoimidazole-succinocarboxamide synthase (236 aa).

The protein belongs to the SAICAR synthetase family.

The catalysed reaction is 5-amino-1-(5-phospho-D-ribosyl)imidazole-4-carboxylate + L-aspartate + ATP = (2S)-2-[5-amino-1-(5-phospho-beta-D-ribosyl)imidazole-4-carboxamido]succinate + ADP + phosphate + 2 H(+). Its pathway is purine metabolism; IMP biosynthesis via de novo pathway; 5-amino-1-(5-phospho-D-ribosyl)imidazole-4-carboxamide from 5-amino-1-(5-phospho-D-ribosyl)imidazole-4-carboxylate: step 1/2. This Akkermansia muciniphila (strain ATCC BAA-835 / DSM 22959 / JCM 33894 / BCRC 81048 / CCUG 64013 / CIP 107961 / Muc) protein is Phosphoribosylaminoimidazole-succinocarboxamide synthase.